Here is a 413-residue protein sequence, read N- to C-terminus: CinA-like protein (413 aa).

It belongs to the CinA family.

The polypeptide is CinA-like protein (Geotalea daltonii (strain DSM 22248 / JCM 15807 / FRC-32) (Geobacter daltonii)).